The primary structure comprises 632 residues: Extracellular metalloproteinase 1 (632 aa).

The N-terminal stretch at 1-19 (MHGLLLAAGLLSLPLRVLA) is a signal peptide. A propeptide spanning residues 20–243 (HPQPSTSLTS…VHNVVDYVSH (224 aa)) is cleaved from the precursor. A glycan (N-linked (GlcNAc...) asparagine) is linked at Asn284. Zn(2+) is bound at residue His427. The active site involves Glu428. Residue His431 coordinates Zn(2+). Residues Asn591 and Asn620 are each glycosylated (N-linked (GlcNAc...) asparagine).

The protein belongs to the peptidase M36 family. Zn(2+) serves as cofactor.

The protein resides in the secreted. Functionally, secreted metalloproteinase that allows assimilation of proteinaceous substrates and probably acts as a virulence factor. The polypeptide is Extracellular metalloproteinase 1 (MEP1) (Arthroderma gypseum (strain ATCC MYA-4604 / CBS 118893) (Microsporum gypseum)).